The sequence spans 188 residues: dCTP deaminase (188 aa).

DCTP is bound by residues Lys111 to Arg116, Thr135 to Glu137, Gln156, Tyr170, and Gln180. Catalysis depends on Glu137, which acts as the Proton donor/acceptor.

It belongs to the dCTP deaminase family. Homotrimer.

The catalysed reaction is dCTP + H2O + H(+) = dUTP + NH4(+). The protein operates within pyrimidine metabolism; dUMP biosynthesis; dUMP from dCTP (dUTP route): step 1/2. In terms of biological role, catalyzes the deamination of dCTP to dUTP. This is dCTP deaminase from Neisseria meningitidis serogroup C / serotype 2a (strain ATCC 700532 / DSM 15464 / FAM18).